The sequence spans 300 residues: FSMKNFHRRAKLEDPEENGVFKYRPRYYLYKHAYFYPPLKRFPVQSSSDSSEENGNGDSSEEEEEEEENSNEEENNEENEDSDGNEDEDSEAENITLSTTTLGYGGDVTPGTASIGLAALQLPKKAGDIGKKSAKEEESDEDEEEEEENEENEAEVDDNEQGTNGTSTNSTEVDSGNGHSGGDNGEEGDQESVTEAQGTTVAGEQDNGGAKTTTSPNGGLEPTPPPQDISGTTLPPSGKTTTPEYEGEYEQTGAHEYDNGYEIYESENGEPRGDSYRAYEDEYSYYKGRSYNSYGGHDYY.

The tract at residues 41 to 258 (RFPVQSSSDS…YEQTGAHEYD (218 aa)) is disordered. Residues Ser-46, Ser-51, Ser-59, Ser-60, Ser-82, and Ser-90 each carry the phosphoserine modification. Over residues 46–58 (SSSDSSEENGNGD) the composition is skewed to low complexity. Acidic residues predominate over residues 59–92 (SSEEEEEEEENSNEEENNEENEDSDGNEDEDSEA). Residues 93–102 (ENITLSTTTL) are compositionally biased toward polar residues. N-linked (GlcNAc...) asparagine glycosylation is present at Asn-94. The segment covering 125–136 (KAGDIGKKSAKE) has biased composition (basic and acidic residues). The span at 137 to 160 (EESDEDEEEEEENEENEAEVDDNE) shows a compositional bias: acidic residues. The residue at position 139 (Ser-139) is a Phosphoserine. Polar residues-rich tracts occupy residues 161–173 (QGTN…STEV), 193–202 (VTEAQGTTVA), and 229–243 (ISGT…TTTP). Asn-164 and Asn-169 each carry an N-linked (GlcNAc...) asparagine glycan. Phosphoserine is present on Ser-266. The Integrin-binding motif motif lies at 272 to 274 (RGD). The residue at position 293 (Ser-293) is a Phosphoserine. A sulfotyrosine mark is found at Tyr-299 and Tyr-300.

Monomer. Interacts with integrins; the interaction promotes cell adhesion.

Its subcellular location is the secreted. In terms of biological role, binds tightly to hydroxyapatite. Appears to form an integral part of the mineralized matrix. Probably important to cell-matrix interaction. Promotes adhesion and migration of various cells via the alpha-V/beta-3 integrin receptor (ITGAV:ITGB3). This Sus scrofa (Pig) protein is Integrin-binding sialoprotein (IBSP).